Reading from the N-terminus, the 340-residue chain is tRNA N6-adenosine threonylcarbamoyltransferase (340 aa).

Fe cation-binding residues include histidine 114 and histidine 118. Residues 140–144 (TISGG), aspartate 173, glycine 186, aspartate 190, and asparagine 281 contribute to the substrate site. Aspartate 309 contributes to the Fe cation binding site.

It belongs to the KAE1 / TsaD family. Fe(2+) serves as cofactor.

The protein resides in the cytoplasm. The catalysed reaction is L-threonylcarbamoyladenylate + adenosine(37) in tRNA = N(6)-L-threonylcarbamoyladenosine(37) in tRNA + AMP + H(+). Required for the formation of a threonylcarbamoyl group on adenosine at position 37 (t(6)A37) in tRNAs that read codons beginning with adenine. Is involved in the transfer of the threonylcarbamoyl moiety of threonylcarbamoyl-AMP (TC-AMP) to the N6 group of A37, together with TsaE and TsaB. TsaD likely plays a direct catalytic role in this reaction. This chain is tRNA N6-adenosine threonylcarbamoyltransferase, found in Christiangramia forsetii (strain DSM 17595 / CGMCC 1.15422 / KT0803) (Gramella forsetii).